The sequence spans 960 residues: Anoctamin-1 (960 aa).

Residues 1-333 (MRVPEKYSTL…FGEKVGLYFA (333 aa)) lie on the Cytoplasmic side of the membrane. Residues 92-115 (TRSVRQDQPLPGKGSPVDAGSPEV) are disordered. S196 bears the Phosphoserine mark. A helical membrane pass occupies residues 334 to 354 (WLGAYTQMLIPASIVGVIVFL). Over 355–406 (YGCATVDENIPSMEMCDQRYNITMCPLCDKTCSYWKMSSACATARASHLFDN) the chain is Extracellular. 4 disulfide bridges follow: C370–C395, C379–C836, C382–C386, and C625–C630. A helical transmembrane segment spans residues 407–427 (PATVFFSVFMALWAATFMEHW). E425 is a binding site for Ca(2+). Over 428–493 (KRKQMRLNYR…RDRFPAYFTN (66 aa)) the chain is Cytoplasmic. The chain crosses the membrane as a helical span at residues 494–514 (LVSIIFMIAVTFAIVLGVIIY). The Extracellular portion of the chain corresponds to 515–542 (RISTAAALAMNSSPSVRSNIRVTVTATA). Residues 543–563 (VIINLVVIILLDEVYGCIARW) form a helical membrane-spanning segment. The Cytoplasmic portion of the chain corresponds to 564–581 (LTKIEVPKTEKSFEERLT). A helical transmembrane segment spans residues 582–602 (FKAFLLKFVNSYTPIFYVAFF). Topologically, residues 603–631 (KGRFVGRPGDYVYIFRSFRMEECAPGGCL) are extracellular. A helical membrane pass occupies residues 632-652 (MELCIQLSIIMLGKQLIQNNL). Ca(2+) contacts are provided by N651, E654, E702, E705, E734, and D738. The Cytoplasmic portion of the chain corresponds to 653 to 699 (FEIGIPKMKKFIRYLKLRRQSPSDREEYVKRKQRYEVDFNLEPFAGL). Transmembrane regions (helical) follow at residues 700 to 720 (TPEY…VASF) and 721 to 741 (PLAP…DAKK). The Cytoplasmic portion of the chain corresponds to 742–758 (FVTELRRPVAIRAKDIG). A helical membrane pass occupies residues 759–779 (IWYNILRGVGKLAVIINAFVI). At 780-866 (SFTSDFIPRL…FWAVLAARLA (87 aa)) the chain is on the extracellular side. N-linked (GlcNAc...) asparagine glycosylation occurs at N806. The helical transmembrane segment at 867-887 (FVIVFQNLVMFMSDFVDWVIP) threads the bilayer. Ca(2+)-binding residues include D883 and D888. The Cytoplasmic segment spans residues 888–960 (DIPKDISQQI…PSYEYHGDAL (73 aa)). The tract at residues 928 to 960 (PRDVPCNNHSPTTHPEAGDGSPVPSYEYHGDAL) is disordered.

It belongs to the anoctamin family. Homodimer. Interacts with CFTR. Interacts with TRPV4. In terms of tissue distribution, expressed at the apical surface of the vomeronasal epithelium (at protein level). Expressed in the lateral and septal nasal glands (at protein level). Highly expressed in pulmonary bronchiole epithelial cells, pancreatic and submandibular gland acinar cells, kidney proximal tubule, all retinal cell layers, most sensory cells of dorsal root ganglia, Leydig cells and spermatocytes (at protein level). In the dorsal root ganglia, detected in small-diameter nociceptive neurons and in larger myelinated neurons (at protein level). In the dorsal root ganglia, expressed in MrgprA3-positive neurons (at protein level). In the developing brain, highly expressed in the ventricular zone and subventricular zone at 12.5 dpc and 14.5 dpc where it is detected in radial glial cells but not in neurons with expression dramatically decreased at P1 (at protein level). Highly expressed in the endometrial stroma (at protein level). In taste buds of the vallate papillae, expressed in the apical region of type I taste cells (at protein level). In the kidney, expressed in the collecting duct (at protein level). In the retina, strongly expressed in the outer and inner plexiform layers, weakly expressed in some somata in the inner nuclear layer and ganglion cell layer and not expressed in the outer nuclear layer (at protein level). Expressed in various retinal neurons including rod bipolar cells (at protein level). Expressed in eye, brain, myometrium and endometrium with higher levels in endometrium than myometrium in estrus and day 18 pregnant mice. Not detected in uterine smooth muscle cells. Expressed at high levels in the thyroid gland and gastrointestinal muscles.

It is found in the apical cell membrane. It localises to the presynapse. It carries out the reaction chloride(in) = chloride(out). ATP and calmodulin are essential for its activation. Channel activity is inhibited by CFTR protein and by chloride inhibitors such as niflumic acid (NFA) and 4,4'-diisothiocyanatostilbene-2,2'-disulfonic acid (DIDS). Activated by heat with activation seen at temperatures above 44 degrees Celsius. Activated by BDNF in radial glial cells. Its function is as follows. Calcium-activated chloride channel (CaCC). Plays a role in transepithelial anion transport and smooth muscle contraction. Required for the normal functioning of the interstitial cells of Cajal (ICCs) which generate electrical pacemaker activity in gastrointestinal smooth muscles. Acts as a major contributor to basal and stimulated chloride conductance in airway epithelial cells and plays an important role in tracheal cartilage development. Required for CFTR activation by enhancing endoplasmic reticulum Ca(2+) store release and is also required for CFTR membrane expression. Required for basal and ATP-dependent mucus secretion in airways and intestine, probably by controlling exocytosis of mucus-filled granules by providing Ca(2+) to an apical signaling compartment. Contributes to airway mucus expression induced by interleukins IL3 and IL8 and by the asthma-associated protein CLCA1 and is required for expression of mucin MUC5AC. However, was shown in another study not to be required for MUC5AC expression. Plays a role in the propagation of Ca(2+) waves in Kolliker's organ in the cochlea and contributes to the refinement of auditory brainstem circuitries prior to hearing onset. In vomeronasal sensory neurons, modulates spontaneous firing patterns in the absence of stimuli as well as the firing pattern of pheromone-evoked activity. Responsible for calcium-activated chloride channel activity in type I taste cells of the vallate papillae. Acts as a heat sensor in nociceptive neurons. In dorsal root ganglion neurons, plays a role in mediating non-histaminergic Mas-related G-protein coupled receptor (MRGPR)-dependent itching, acting as a downstream effector of MRGPRs. In the developing brain, required for the Ca(2+)-dependent process extension of radial glial cells. In Mus musculus (Mouse), this protein is Anoctamin-1 (Ano1).